The following is a 156-amino-acid chain: Putative pre-16S rRNA nuclease (156 aa).

This sequence belongs to the YqgF nuclease family.

The protein localises to the cytoplasm. In terms of biological role, could be a nuclease involved in processing of the 5'-end of pre-16S rRNA. In Albidiferax ferrireducens (strain ATCC BAA-621 / DSM 15236 / T118) (Rhodoferax ferrireducens), this protein is Putative pre-16S rRNA nuclease.